A 254-amino-acid polypeptide reads, in one-letter code: Leucyl/phenylalanyl-tRNA--protein transferase (254 aa).

This sequence belongs to the L/F-transferase family.

Its subcellular location is the cytoplasm. It carries out the reaction N-terminal L-lysyl-[protein] + L-leucyl-tRNA(Leu) = N-terminal L-leucyl-L-lysyl-[protein] + tRNA(Leu) + H(+). The catalysed reaction is N-terminal L-arginyl-[protein] + L-leucyl-tRNA(Leu) = N-terminal L-leucyl-L-arginyl-[protein] + tRNA(Leu) + H(+). The enzyme catalyses L-phenylalanyl-tRNA(Phe) + an N-terminal L-alpha-aminoacyl-[protein] = an N-terminal L-phenylalanyl-L-alpha-aminoacyl-[protein] + tRNA(Phe). Functions in the N-end rule pathway of protein degradation where it conjugates Leu, Phe and, less efficiently, Met from aminoacyl-tRNAs to the N-termini of proteins containing an N-terminal arginine or lysine. This chain is Leucyl/phenylalanyl-tRNA--protein transferase, found in Burkholderia multivorans (strain ATCC 17616 / 249).